Reading from the N-terminus, the 490-residue chain is Thyroid hormone receptor alpha (490 aa).

Residues 1 to 32 (MEQKPSKVECGSDPEENSARSPDGKRKRKNGQ) are disordered. The modulating stretch occupies residues 1–52 (MEQKPSKVECGSDPEENSARSPDGKRKRKNGQCSLKTSMSGYIPSYLDKDEQ). Zn(2+)-binding residues include cysteine 53, cysteine 56, cysteine 70, cysteine 73, cysteine 91, cysteine 97, cysteine 107, and cysteine 110. 2 consecutive NR C4-type zinc fingers follow at residues 53–73 (CVVC…CEGC) and 91–115 (CKYD…FKKC). Residues 53 to 127 (CVVCGDKATG…VGMAMDLVLD (75 aa)) constitute a DNA-binding region (nuclear receptor). The region spanning 163-407 (EEWDLIHIAT…EGQQLLGMHV (245 aa)) is the NR LBD domain. Arginine 228 and serine 277 together coordinate 3,3',5-triiodo-L-thyronine. A disordered region spans residues 457 to 490 (AVCGEDDSSEADSPSSSEEEPEVCEDLAGNAASP).

The protein belongs to the nuclear hormone receptor family. NR1 subfamily. Binds DNA as a dimer; homodimer and heterodimer with RXRB. Interacts with NCOA3 and NCOA6 coactivators, leading to a strong increase of transcription of target genes. Probably interacts with SFPQ. Interacts with C1D. Interacts with AKAP13. Interacts with TP53INP2. Interacts with PER2. Isoform alpha-2 and isoform alpha-1 interact with TACC1, but the interaction with alpha-1 is weaker. The interaction with isoform alpha-1, but not alpha-2, is decreased in the presence of thyroid hormone T3.

Its subcellular location is the nucleus. It localises to the cytoplasm. Its function is as follows. Nuclear hormone receptor that can act as a repressor or activator of transcription. High affinity receptor for thyroid hormones, including triiodothyronine and thyroxine. Functionally, does not bind thyroid hormone and functions as a weak dominant negative inhibitor of thyroid hormone action. The chain is Thyroid hormone receptor alpha (THRA) from Homo sapiens (Human).